Reading from the N-terminus, the 839-residue chain is Transcription regulator protein BACH2 (839 aa).

The BTB domain maps to 37 to 103 (CDVTLIVERK…AYTAKLLLSR (67 aa)). Disordered stretches follow at residues 150-170 (QRPQEDHGNSAGEEEEEEETM) and 247-331 (HGTS…LDRS). Acidic residues predominate over residues 161–170 (GEEEEEEETM). The segment covering 247–263 (HGTSGFASTFSEDSPGN) has biased composition (polar residues). The span at 297–312 (TDIKDRPGDVEMDRKQ) shows a compositional bias: basic and acidic residues. A Phosphoserine modification is found at S314. The span at 321 to 331 (TPTGAACLDRS) shows a compositional bias: low complexity. Residues K381 and K420 each participate in a glycyl lysine isopeptide (Lys-Gly) (interchain with G-Cter in SUMO2) cross-link. S520 carries the post-translational modification Phosphoserine. Residues 582–609 (QSYGTNSSDESGSFSEADSESCPVQDRG) form a disordered region. A compositionally biased stretch (polar residues) spans 583 to 597 (SYGTNSSDESGSFSE). Residues 645 to 708 (FIHDIRRRSK…GELLDNFSCL (64 aa)) form the bZIP domain. The tract at residues 650–666 (RRRSKNRIAAQRCRKRK) is basic motif. Residues 670-677 (IQNLECEI) are leucine-zipper. The interval 778 to 813 (PWVPSNTSENCTSGRRLEGSDPGTFSERGPPLEARS) is disordered. Positions 781–790 (PSNTSENCTS) are enriched in polar residues. Residues 819–839 (DFCQEMTEKCTTDEQPRKDYA) carry the Nuclear export signal motif.

Belongs to the bZIP family. CNC subfamily. Homodimer; disulfide-linked. Heterodimer of BACH2 and Maf-related transcription factors. Post-translationally, the reversible disulfide bond may provide a mechanism to regulate the activity in oxidative stress responses. Phosphorylation at Ser-520 downstream of the PI-3K pathway promotes nuclear export. In terms of tissue distribution, detected in brain and spleen.

It localises to the cytoplasm. The protein resides in the nucleus. In terms of biological role, transcriptional regulator that acts as a repressor or activator. Binds to Maf recognition elements (MARE). Plays an important role in coordinating transcription activation and repression by MAFK. Induces apoptosis in response to oxidative stress through repression of the antiapoptotic factor HMOX1. Positively regulates the nuclear import of actin. Is a key regulator of adaptive immunity, crucial for the maintenance of regulatory T-cell function and B-cell maturation. This chain is Transcription regulator protein BACH2 (Bach2), found in Mus musculus (Mouse).